The sequence spans 214 residues: 3-isopropylmalate dehydratase small subunit (214 aa).

This sequence belongs to the LeuD family. LeuD type 1 subfamily. Heterodimer of LeuC and LeuD.

The enzyme catalyses (2R,3S)-3-isopropylmalate = (2S)-2-isopropylmalate. It participates in amino-acid biosynthesis; L-leucine biosynthesis; L-leucine from 3-methyl-2-oxobutanoate: step 2/4. Functionally, catalyzes the isomerization between 2-isopropylmalate and 3-isopropylmalate, via the formation of 2-isopropylmaleate. This is 3-isopropylmalate dehydratase small subunit from Pseudomonas putida (strain GB-1).